The sequence spans 186 residues: Ribosome-recycling factor (186 aa).

It belongs to the RRF family.

The protein localises to the cytoplasm. Responsible for the release of ribosomes from messenger RNA at the termination of protein biosynthesis. May increase the efficiency of translation by recycling ribosomes from one round of translation to another. In Rickettsia conorii (strain ATCC VR-613 / Malish 7), this protein is Ribosome-recycling factor.